A 293-amino-acid polypeptide reads, in one-letter code: Large ribosomal subunit protein uL18 (293 aa).

Residues 247 to 263 (IRANPAHEKKQPRDGLV) are compositionally biased toward basic and acidic residues. A disordered region spans residues 247–283 (IRANPAHEKKQPRDGLVKKRWNRAKMSLKQKRDRVKQ). Over residues 264–283 (KKRWNRAKMSLKQKRDRVKQ) the composition is skewed to basic residues.

It belongs to the universal ribosomal protein uL18 family. In terms of assembly, component of the large ribosomal subunit (LSU).

It localises to the cytoplasm. The protein resides in the nucleus. Component of the ribosome, a large ribonucleoprotein complex responsible for the synthesis of proteins in the cell. The small ribosomal subunit (SSU) binds messenger RNAs (mRNAs) and translates the encoded message by selecting cognate aminoacyl-transfer RNA (tRNA) molecules. The large subunit (LSU) contains the ribosomal catalytic site termed the peptidyl transferase center (PTC), which catalyzes the formation of peptide bonds, thereby polymerizing the amino acids delivered by tRNAs into a polypeptide chain. The nascent polypeptides leave the ribosome through a tunnel in the LSU and interact with protein factors that function in enzymatic processing, targeting, and the membrane insertion of nascent chains at the exit of the ribosomal tunnel. This chain is Large ribosomal subunit protein uL18 (RPL5), found in Suberites domuncula (Sponge).